We begin with the raw amino-acid sequence, 229 residues long: NAD(P)H-hydrate epimerase (229 aa).

The YjeF N-terminal domain occupies 10–217; that stretch reads AINVDQELFN…ALQRKYDLNL (208 aa). 60 to 64 is a binding site for (6S)-NADPHX; it reads NNGGD. Residues Asn-61 and Asp-125 each coordinate K(+). Residues 129-135 and Asp-158 each bind (6S)-NADPHX; that span reads GFSFKPP. K(+) is bound at residue Ser-161.

This sequence belongs to the NnrE/AIBP family. It depends on K(+) as a cofactor.

The enzyme catalyses (6R)-NADHX = (6S)-NADHX. The catalysed reaction is (6R)-NADPHX = (6S)-NADPHX. Functionally, catalyzes the epimerization of the S- and R-forms of NAD(P)HX, a damaged form of NAD(P)H that is a result of enzymatic or heat-dependent hydration. This is a prerequisite for the S-specific NAD(P)H-hydrate dehydratase to allow the repair of both epimers of NAD(P)HX. This is NAD(P)H-hydrate epimerase from Drosophila ananassae (Fruit fly).